Here is a 415-residue protein sequence, read N- to C-terminus: Serine hydroxymethyltransferase (415 aa).

(6S)-5,6,7,8-tetrahydrofolate-binding positions include leucine 117 and glycine 121–leucine 123. Lysine 226 is subject to N6-(pyridoxal phosphate)lysine. Serine 349–phenylalanine 351 provides a ligand contact to (6S)-5,6,7,8-tetrahydrofolate.

It belongs to the SHMT family. In terms of assembly, homodimer. The cofactor is pyridoxal 5'-phosphate.

It is found in the cytoplasm. The enzyme catalyses (6R)-5,10-methylene-5,6,7,8-tetrahydrofolate + glycine + H2O = (6S)-5,6,7,8-tetrahydrofolate + L-serine. Its pathway is one-carbon metabolism; tetrahydrofolate interconversion. It functions in the pathway amino-acid biosynthesis; glycine biosynthesis; glycine from L-serine: step 1/1. Its function is as follows. Catalyzes the reversible interconversion of serine and glycine with tetrahydrofolate (THF) serving as the one-carbon carrier. This reaction serves as the major source of one-carbon groups required for the biosynthesis of purines, thymidylate, methionine, and other important biomolecules. Also exhibits THF-independent aldolase activity toward beta-hydroxyamino acids, producing glycine and aldehydes, via a retro-aldol mechanism. This is Serine hydroxymethyltransferase from Geobacter sp. (strain M21).